The primary structure comprises 160 residues: DNA topoisomerase small subunit (160 aa).

Part of the DNA topoisomerase complex made of gp39, gp52 and gp60. Mg(2+) serves as cofactor.

It carries out the reaction ATP-dependent breakage, passage and rejoining of double-stranded DNA.. Functionally, small subunit of the DNA topoisomerase that untwists superhelical DNA. Controls topological states of double-stranded DNA by transient breakage and subsequent rejoining of DNA strands. This Enterobacteria phage T4 (Bacteriophage T4) protein is DNA topoisomerase small subunit (60).